Reading from the N-terminus, the 184-residue chain is Ribosome-recycling factor (184 aa).

This sequence belongs to the RRF family.

The protein resides in the cytoplasm. Responsible for the release of ribosomes from messenger RNA at the termination of protein biosynthesis. May increase the efficiency of translation by recycling ribosomes from one round of translation to another. This chain is Ribosome-recycling factor, found in Clostridium botulinum (strain ATCC 19397 / Type A).